Here is a 269-residue protein sequence, read N- to C-terminus: Protein TORNADO 2 (269 aa).

Residues 1-10 (MPLSNNVIGC) are Cytoplasmic-facing. The chain crosses the membrane as a helical span at residues 11–31 (INFITVLLSIPVIGAGIWLAI). Residues 32-44 (GTVNSCVKLLQWP) lie on the Extracellular side of the membrane. A helical transmembrane segment spans residues 45–65 (VIILGVLILLVGLAGFIGGFW). Over 66-71 (RITWLL) the chain is Cytoplasmic. A helical transmembrane segment spans residues 72 to 92 (VVYLIAMLILIVLLGCLVGFI). Residues 93-231 (YMVTIRGSGH…NIKVDWLKAD (139 aa)) are Extracellular-facing. A glycan (N-linked (GlcNAc...) asparagine) is linked at asparagine 200. The helical transmembrane segment at 232-252 (IFLLLALIGLIIVYIIGCCAF) threads the bilayer. The Cytoplasmic segment spans residues 253-269 (RNAETEDIFRKYKQGYT).

The protein belongs to the tetraspanin (TM4SF) family. As to expression, expressed in seedlings, roots, leaves, stems, apex, siliques and flowers. Present in ovules, prominently in nucellus and integuments.

It is found in the membrane. Functionally, involved in the basipetal transport of auxin (IAA) that modulates growth and organs organization, as well as cell differentiation. Regulates shoot apical meristem (SAM) organization in the peripheral zone. Required for initial meristematic divisions in the epidermal/lateral root cap leading to the formation of epidermal cells and a clone of lateral root cap cells, as well as for the maintenance of the radial pattern of cell specification in the root, thus regulating the distinction between the lateral root cap and epidermis. Together with WIH peptides, promotes megasporogenesis. The sequence is that of Protein TORNADO 2 (TRN2) from Arabidopsis thaliana (Mouse-ear cress).